Reading from the N-terminus, the 127-residue chain is Putative pre-16S rRNA nuclease (127 aa).

It belongs to the YqgF nuclease family.

The protein resides in the cytoplasm. In terms of biological role, could be a nuclease involved in processing of the 5'-end of pre-16S rRNA. This is Putative pre-16S rRNA nuclease from Campylobacter jejuni subsp. jejuni serotype O:23/36 (strain 81-176).